Consider the following 122-residue polypeptide: Protein preY, mitochondrial (122 aa).

A mitochondrion-targeting transit peptide spans 1–40; that stretch reads MLAVRAWGRTYNTLVQRKLNAACPTGALPAVTLRPLHCSL. Residues 56–102 form the TRM112 domain; it reads DPTLLQFLVCPLSRKSLRYEESTNELINDELGIAYPIVDGIPNMIPQ.

The protein belongs to the PREY family.

Its subcellular location is the mitochondrion. In terms of biological role, in mitochondria, S-adenosylmethionine-dependent methyltransferase chaperone that supports both coenzyme Q biosynthesis and NADH:ubiquinone oxidoreductase complex (complex I, MT-ND1) assembly. The polypeptide is Protein preY, mitochondrial (pyurf) (Xenopus tropicalis (Western clawed frog)).